The sequence spans 181 residues: Cyclic phosphodiesterase (181 aa).

His-42 acts as the Proton donor/acceptor in catalysis. Thr-44 lines the substrate pocket. Cystine bridges form between Cys-64–Cys-177 and Cys-104–Cys-110. Residue His-119 is the Proton donor/acceptor of the active site. Residues Ser-121 and Tyr-124 each contribute to the substrate site.

This sequence belongs to the 2H phosphoesterase superfamily. CPD1 family. As to expression, expressed in leaves, stems, roots, floral buds and germinating seeds.

The protein localises to the cytoplasm. The catalysed reaction is ADP-alpha-D-ribose 1'',2''-cyclic phosphate + H2O = ADP-alpha-D-ribose 1''-phosphate + H(+). It carries out the reaction 2',3'-cyclophospho-AMP + H2O = adenosine 2'-phosphate + H(+). It catalyses the reaction 2',3'-cyclophospho-GMP + H2O = guanosine 2'-phosphate + H(+). The enzyme catalyses 2',3'-cyclophospho-UMP + H2O = uridine 2'-phosphate + H(+). The catalysed reaction is 2',3'-cyclophospho-CMP + H2O = cytidine 2'-phosphate + H(+). Inhibited by Cu(2+) and Zn(2+) at 0.5 mM by 93 and 87% respectively. Not inhibited by Ca(2+), Mg(2+), Co(2+), Ni(2+), and EDTA at 0.5 mM. In terms of biological role, hydrolyzes ADP-ribose 1'',2''-cyclic phosphate (Appr&gt;1) that is produced during tRNA splicing into ADP-ribose 1''-phosphate (Appr-1''p). Also acts on nucleoside 2',3'-cyclic phosphates. This chain is Cyclic phosphodiesterase, found in Arabidopsis thaliana (Mouse-ear cress).